Here is a 349-residue protein sequence, read N- to C-terminus: S-adenosylmethionine:tRNA ribosyltransferase-isomerase (349 aa).

The protein belongs to the QueA family. In terms of assembly, monomer.

It localises to the cytoplasm. It carries out the reaction 7-aminomethyl-7-carbaguanosine(34) in tRNA + S-adenosyl-L-methionine = epoxyqueuosine(34) in tRNA + adenine + L-methionine + 2 H(+). Its pathway is tRNA modification; tRNA-queuosine biosynthesis. Functionally, transfers and isomerizes the ribose moiety from AdoMet to the 7-aminomethyl group of 7-deazaguanine (preQ1-tRNA) to give epoxyqueuosine (oQ-tRNA). In Parabacteroides distasonis (strain ATCC 8503 / DSM 20701 / CIP 104284 / JCM 5825 / NCTC 11152), this protein is S-adenosylmethionine:tRNA ribosyltransferase-isomerase.